The sequence spans 611 residues: Pleckstrin homology domain-containing family N member 1 (611 aa).

Residues 1 to 45 are disordered; sequence MGNSHCVPQAPRRLRASFSRKPSLKGNREDSARMSAGLPGPEAAR. The N-myristoyl glycine moiety is linked to residue Gly-2. An interaction with C1QBP region spans residues 61–100; that stretch reads TDILDLENQRENLEQPFLSVFKKGRRRVPVRNLGKVVHYA. PH domains are found at residues 96–192 and 222–319; these read VVHY…TALL and AVCA…THRE. Phosphotyrosine is present on Tyr-302. Disordered stretches follow at residues 323 to 424, 438 to 468, and 483 to 611; these read PLPG…PVTP, ESSP…TSHR, and MQSA…VQWI. Residues 341 to 350 are compositionally biased toward low complexity; the sequence is GSLSSGGQTS. The segment covering 360 to 391 has biased composition (polar residues); sequence STRTSHSLPESSVPSTVGCSSQHTPDQANSDR. Phosphotyrosine is present on Tyr-456. The segment covering 498 to 509 has biased composition (low complexity); the sequence is VPVSVPASDPRS. The residue at position 559 (Ser-559) is a Phosphoserine. Residues 570-585 are compositionally biased toward basic and acidic residues; it reads RSPRRSRDPGYDHLWD.

As to quaternary structure, found in a complex with cytochrome c mRNA and various ribosomal proteins. Interacts with C1QBP. Interacts with ELAVL1. Interacts with BID. Post-translationally, phosphorylation is essential for its mitochondrial localization and regulates its interaction with C1QBP. Ubiquitous. Epressed in several cancer cell lines of differing origin.

The protein resides in the cell membrane. Its subcellular location is the mitochondrion. It is found in the mitochondrion membrane. In terms of biological role, controls the stability of the leptin mRNA harboring an AU-rich element (ARE) in its 3' UTR, in cooperation with the RNA stabilizer ELAVL1. Decreases the stability of the leptin mRNA by antagonizing the function of ELAVL1 by inducing its atypical recruitment from the nucleus to the cytosol. Binds to cardiolipin (CL), phosphatidic acid (PA), phosphatidylinositol 4-phosphate (PtdIns(4)P) and phosphatidylserine (PS). Promotes apoptosis by enhancing BAX-BAK hetero-oligomerization via interaction with BID in colon cancer cells. The polypeptide is Pleckstrin homology domain-containing family N member 1 (PLEKHN1) (Homo sapiens (Human)).